A 260-amino-acid polypeptide reads, in one-letter code: 2-amino-3,7-dideoxy-D-threo-hept-6-ulosonate synthase 1 (260 aa).

D26 acts as the Proton acceptor in catalysis. Residues 26 to 30 (DHGIT) and 144 to 146 (YPR) contribute to the 1-deoxy-D-threo-hexo-2,5-diulose 6-phosphate site. The active-site Proton donor is the Y144. K172 acts as the Schiff-base intermediate with substrate in catalysis. Residues 194-195 (GG) and 221-222 (GR) each bind 1-deoxy-D-threo-hexo-2,5-diulose 6-phosphate.

Belongs to the DeoC/FbaB aldolase family. ADHS subfamily. Homodecamer.

The catalysed reaction is 1-deoxy-D-threo-hexo-2,5-diulose 6-phosphate + L-aspartate 4-semialdehyde = 2,3-dioxopropyl phosphate + 2-amino-2,3,7-trideoxy-D-lyxo-hept-6-ulosonate. In terms of biological role, catalyzes a transaldol reaction between 6-deoxy-5-ketofructose 1-phosphate (DKFP) and L-aspartate semialdehyde (ASA) with an elimination of hydroxypyruvaldehyde phosphate to yield 2-amino-3,7-dideoxy-D-threo-hept-6-ulosonate (ADH). Plays a key role in an alternative pathway of the biosynthesis of 3-dehydroquinate (DHQ), which is involved in the canonical pathway for the biosynthesis of aromatic amino acids. This chain is 2-amino-3,7-dideoxy-D-threo-hept-6-ulosonate synthase 1, found in Archaeoglobus fulgidus (strain ATCC 49558 / DSM 4304 / JCM 9628 / NBRC 100126 / VC-16).